We begin with the raw amino-acid sequence, 34 residues long: Tau-theraphotoxin-Pc1c (34 aa).

3 disulfide bridges follow: Cys2/Cys16, Cys9/Cys21, and Cys15/Cys28. Phe34 is modified (phenylalanine amide).

Belongs to the neurotoxin 10 (Hwtx-1) family. 62 (Vatx) subfamily. In terms of tissue distribution, expressed by the venom gland.

The protein localises to the secreted. Selectively activates mammalian TRPV1, or capsaicin receptor, a non-selective cation channel expressed by sensory neurons of the pain pathway. Is more potent than VaTx1 and VaTx2. Interacts with distinct regions of the channel than capsaicin, since it only acts on the extracellular face of the channel, and capsaicin binds to the cytosolic side. Also activates avian TRPV1, which is insensitive to capsaicin. In mice, elicits pain-related behaviors, such as licking and flinching of the affected limb. The paw of toxin-injected mice shows substantial edema. The protein is Tau-theraphotoxin-Pc1c of Psalmopoeus cambridgei (Trinidad chevron tarantula).